A 79-amino-acid polypeptide reads, in one-letter code: UPF0154 protein SAK_1616 (79 aa).

A helical membrane pass occupies residues 5-25; that stretch reads IWILLIIVALFGGLVGGIFIA.

The protein belongs to the UPF0154 family.

The protein localises to the cell membrane. This chain is UPF0154 protein SAK_1616, found in Streptococcus agalactiae serotype Ia (strain ATCC 27591 / A909 / CDC SS700).